A 156-amino-acid polypeptide reads, in one-letter code: Ribosomal RNA large subunit methyltransferase H (156 aa).

Residues L73, G104, and 123 to 128 (LGALTL) each bind S-adenosyl-L-methionine.

It belongs to the RNA methyltransferase RlmH family. Homodimer.

It is found in the cytoplasm. The enzyme catalyses pseudouridine(1915) in 23S rRNA + S-adenosyl-L-methionine = N(3)-methylpseudouridine(1915) in 23S rRNA + S-adenosyl-L-homocysteine + H(+). Its function is as follows. Specifically methylates the pseudouridine at position 1915 (m3Psi1915) in 23S rRNA. The polypeptide is Ribosomal RNA large subunit methyltransferase H (Dichelobacter nodosus (strain VCS1703A)).